We begin with the raw amino-acid sequence, 218 residues long: Large ribosomal subunit protein eL13 (218 aa).

The interval Ala-196–Lys-218 is disordered. Positions Ala-199–Lys-218 are enriched in basic and acidic residues.

Belongs to the eukaryotic ribosomal protein eL13 family. As to quaternary structure, component of the 60S large ribosomal subunit (LSU).

Its subcellular location is the cytoplasm. Its function is as follows. Component of the ribosome, a large ribonucleoprotein complex responsible for the synthesis of proteins in the cell. The small ribosomal subunit (SSU) binds messenger RNAs (mRNAs) and translates the encoded message by selecting cognate aminoacyl-transfer RNA (tRNA) molecules. The large subunit (LSU) contains the ribosomal catalytic site termed the peptidyl transferase center (PTC), which catalyzes the formation of peptide bonds, thereby polymerizing the amino acids delivered by tRNAs into a polypeptide chain. The nascent polypeptides leave the ribosome through a tunnel in the LSU and interact with protein factors that function in enzymatic processing, targeting, and the membrane insertion of nascent chains at the exit of the ribosomal tunnel. As part of the LSU, it is probably required for its formation and the maturation of rRNAs. This Drosophila melanogaster (Fruit fly) protein is Large ribosomal subunit protein eL13 (RpL13).